A 182-amino-acid polypeptide reads, in one-letter code: Small ribosomal subunit protein uS4c (182 aa).

The S4 RNA-binding domain occupies 82–143 (MRLDNILFRL…KERSKVLIQN (62 aa)).

This sequence belongs to the universal ribosomal protein uS4 family. As to quaternary structure, part of the 30S ribosomal subunit. Contacts protein S5. The interaction surface between S4 and S5 is involved in control of translational fidelity.

Its subcellular location is the plastid. It is found in the chloroplast. Functionally, one of the primary rRNA binding proteins, it binds directly to 16S rRNA where it nucleates assembly of the body of the 30S subunit. In terms of biological role, with S5 and S12 plays an important role in translational accuracy. The polypeptide is Small ribosomal subunit protein uS4c (rps4) (Tigridia sp. (strain Lejeune 1997)).